Here is a 400-residue protein sequence, read N- to C-terminus: uncharacterized protein (400 aa).

An N-terminal signal peptide occupies residues 1–23; the sequence is MSRKLLLALTFLVVLGIAVVVMA.

This is an uncharacterized protein from Archaeoglobus fulgidus (strain ATCC 49558 / DSM 4304 / JCM 9628 / NBRC 100126 / VC-16).